A 179-amino-acid chain; its full sequence is Inner membrane-spanning protein YciB (179 aa).

The next 5 helical transmembrane spans lie at 3–23 (FLFDLFPVILFFVAFKLFGIY), 49–69 (PMQWVSLAIIAVFGGATILLH), 76–96 (WKPTVLYWLFAVTLIGSVIGW), 121–141 (VAWAGFFAVMGVLNLYVAYQF), and 149–169 (FKLFGSMGLMLVFIVAQSIWL).

This sequence belongs to the YciB family.

It is found in the cell inner membrane. Its function is as follows. Plays a role in cell envelope biogenesis, maintenance of cell envelope integrity and membrane homeostasis. This is Inner membrane-spanning protein YciB from Cupriavidus metallidurans (strain ATCC 43123 / DSM 2839 / NBRC 102507 / CH34) (Ralstonia metallidurans).